Here is a 197-residue protein sequence, read N- to C-terminus: MKYPDFSLENTLSGIIAGVDEVGRGPLAGPVISAAVIFTDRDTVIDGINDSKKLTPKCRQVLYEKITSVAKFGIGMASVEEINSYNILQATKLSMKRALANLNLELDYVLVDGNQPPEVKWQVKSIVNGDSLSISIAAASIVAKVTRDRLMEELHNKHPQYNWYKNKGYGTKEHLSAIGLHGITKHHRKNFAPIRIL.

In terms of domain architecture, RNase H type-2 spans 14 to 197; it reads GIIAGVDEVG…RKNFAPIRIL (184 aa). The a divalent metal cation site is built by aspartate 20, glutamate 21, and aspartate 112.

It belongs to the RNase HII family. Mn(2+) is required as a cofactor. Mg(2+) serves as cofactor.

Its subcellular location is the cytoplasm. The enzyme catalyses Endonucleolytic cleavage to 5'-phosphomonoester.. In terms of biological role, endonuclease that specifically degrades the RNA of RNA-DNA hybrids. This chain is Ribonuclease HII, found in Wolbachia pipientis subsp. Culex pipiens (strain wPip).